The following is a 540-amino-acid chain: Chaperonin GroEL (540 aa).

ATP-binding positions include 29 to 32, 86 to 90, glycine 413, 476 to 478, and aspartate 492; these read TIGP, DGTTT, and NAA.

Belongs to the chaperonin (HSP60) family. As to quaternary structure, forms a cylinder of 14 subunits composed of two heptameric rings stacked back-to-back. Interacts with the co-chaperonin GroES.

It is found in the cytoplasm. It catalyses the reaction ATP + H2O + a folded polypeptide = ADP + phosphate + an unfolded polypeptide.. Together with its co-chaperonin GroES, plays an essential role in assisting protein folding. The GroEL-GroES system forms a nano-cage that allows encapsulation of the non-native substrate proteins and provides a physical environment optimized to promote and accelerate protein folding. The chain is Chaperonin GroEL from Staphylococcus saprophyticus subsp. saprophyticus (strain ATCC 15305 / DSM 20229 / NCIMB 8711 / NCTC 7292 / S-41).